The following is a 380-amino-acid chain: Palmitoyltransferase ZDHHC18 (380 aa).

A disordered region spans residues Met-1 to Arg-59. The Cytoplasmic portion of the chain corresponds to Met-1–His-82. Position 19 is a phosphoserine (Ser-19). Residues Pro-27–Gly-40 are compositionally biased toward pro residues. The chain crosses the membrane as a helical span at residues Gly-83–Phe-103. The Lumenal portion of the chain corresponds to Asp-104 to Thr-111. Residues Leu-112–Leu-132 form a helical membrane-spanning segment. The Cytoplasmic portion of the chain corresponds to Gln-133 to Arg-227. The region spanning Lys-184–Leu-234 is the DHHC domain. Cys-214 (S-palmitoyl cysteine intermediate) is an active-site residue. Residues Phe-228–Val-248 traverse the membrane as a helical segment. Residues Thr-249–Ala-269 lie on the Lumenal side of the membrane. The helical transmembrane segment at Ser-270 to Phe-290 threads the bilayer. The Cytoplasmic portion of the chain corresponds to His-291–Pro-380. Residues Ala-355 to Pro-380 form a disordered region.

Belongs to the DHHC palmitoyltransferase family. ERF2/ZDHHC9 subfamily. In terms of tissue distribution, ubiquitously expressed.

It is found in the golgi apparatus membrane. It carries out the reaction L-cysteinyl-[protein] + hexadecanoyl-CoA = S-hexadecanoyl-L-cysteinyl-[protein] + CoA. In terms of biological role, palmitoyltransferase that catalyzes the addition of palmitate onto various protein substrates, such as CGAS, HRAS and LCK. Palmitoylates HRAS and LCK. Acts as a negative regulator of the cGAS-STING pathway be mediating palmitoylation and inactivation of CGAS. May also have a palmitoyltransferase activity toward the beta-2 adrenergic receptor/ADRB2 and therefore regulate G protein-coupled receptor signaling. The polypeptide is Palmitoyltransferase ZDHHC18 (Mus musculus (Mouse)).